The chain runs to 448 residues: tRNA modification GTPase MnmE (448 aa).

(6S)-5-formyl-5,6,7,8-tetrahydrofolate is bound by residues R24, E81, and K120. Residues 216–373 (GLNVVLVGAP…LKRTLLREAG (158 aa)) enclose the TrmE-type G domain. K(+) is bound at residue N226. GTP-binding positions include 226–231 (NVGKSS), 245–251 (TDIAGTT), and 270–273 (DTAG). S230 is a binding site for Mg(2+). K(+) contacts are provided by T245, I247, and T250. Residue T251 participates in Mg(2+) binding. Position 448 (K448) interacts with (6S)-5-formyl-5,6,7,8-tetrahydrofolate.

The protein belongs to the TRAFAC class TrmE-Era-EngA-EngB-Septin-like GTPase superfamily. TrmE GTPase family. In terms of assembly, homodimer. Heterotetramer of two MnmE and two MnmG subunits. Requires K(+) as cofactor.

Its subcellular location is the cytoplasm. Its function is as follows. Exhibits a very high intrinsic GTPase hydrolysis rate. Involved in the addition of a carboxymethylaminomethyl (cmnm) group at the wobble position (U34) of certain tRNAs, forming tRNA-cmnm(5)s(2)U34. The polypeptide is tRNA modification GTPase MnmE (Neisseria meningitidis serogroup B (strain ATCC BAA-335 / MC58)).